We begin with the raw amino-acid sequence, 448 residues long: Solute carrier family 52, riboflavin transporter, member 2 (448 aa).

5 helical membrane passes run 14-34, 47-67, 79-99, 105-125, and 147-167; these read LLVA…WVEL, LPSY…VVTL, VPIQ…APLW, VAGQ…ALAC, and FFLG…VQGV. Residue asparagine 178 is glycosylated (N-linked (GlcNAc...) asparagine). Residues 198–218 form a helical membrane-spanning segment; sequence WALTALLVTSAAAFQGLLLLL. Positions 228–267 are disordered; that stretch reads GAGPELPLGSPGAEEEEKEEEEALPLQEPPSQAAGTIPGP. Residues 240–250 show a composition bias toward acidic residues; it reads AEEEEKEEEEA. 5 helical membrane passes run 280–300, 315–335, 342–362, 369–389, and 407–427; these read AFLL…LPAV, LAVV…MGVL, LVGL…LAIL, VGTT…LCVF, and ALLA…GTMF.

Belongs to the riboflavin transporter family.

The protein resides in the cell membrane. It carries out the reaction riboflavin(in) = riboflavin(out). With respect to regulation, riboflavin transport is Na(+)-independent but moderately pH-sensitive. Activity is strongly inhibited by riboflavin analogs, such as lumiflavin. Weakly inhibited by flavin adenine dinucleotide (FAD) and flavin mononucleotide (FMN). Its function is as follows. Plasma membrane transporter mediating the uptake by cells of the water soluble vitamin B2/riboflavin that plays a key role in biochemical oxidation-reduction reactions of the carbohydrate, lipid, and amino acid metabolism. May also act as a receptor for 4-hydroxybutyrate. (Microbial infection) In case of infection by retroviruses, acts as a cell receptor to retroviral envelopes similar to the porcine endogenous retrovirus (PERV-A). The protein is Solute carrier family 52, riboflavin transporter, member 2 (SLC52A2) of Papio hamadryas (Hamadryas baboon).